We begin with the raw amino-acid sequence, 175 residues long: ATP synthase subunit b (175 aa).

The helical transmembrane segment at 14-34 threads the bilayer; the sequence is LSPNPGLIFWTTVSFVIVLLI.

Belongs to the ATPase B chain family. As to quaternary structure, F-type ATPases have 2 components, F(1) - the catalytic core - and F(0) - the membrane proton channel. F(1) has five subunits: alpha(3), beta(3), gamma(1), delta(1), epsilon(1). F(0) has four main subunits: a(1), b(2) and c(10-14). The alpha and beta chains form an alternating ring which encloses part of the gamma chain. F(1) is attached to F(0) by a central stalk formed by the gamma and epsilon chains, while a peripheral stalk is formed by the delta and b chains.

It is found in the cell inner membrane. F(1)F(0) ATP synthase produces ATP from ADP in the presence of a proton or sodium gradient. F-type ATPases consist of two structural domains, F(1) containing the extramembraneous catalytic core and F(0) containing the membrane proton channel, linked together by a central stalk and a peripheral stalk. During catalysis, ATP synthesis in the catalytic domain of F(1) is coupled via a rotary mechanism of the central stalk subunits to proton translocation. Functionally, component of the F(0) channel, it forms part of the peripheral stalk, linking F(1) to F(0). This chain is ATP synthase subunit b, found in Chlorobium phaeobacteroides (strain DSM 266 / SMG 266 / 2430).